Consider the following 61-residue polypeptide: Photosystem II reaction center X protein (61 aa).

The helical transmembrane segment at 26–46 (IGSFIAAALLIVVPATAFLIF) threads the bilayer.

Belongs to the PsbX family. Type 2 subfamily. As to quaternary structure, PSII consists of a core antenna complex that captures photons, and an electron transfer chain that converts photonic excitation into a charge separation. PSII forms dimeric complexes.

The protein resides in the cellular thylakoid membrane. Involved in the binding and/or turnover of quinones at the Q(B) site of Photosystem II. The protein is Photosystem II reaction center X protein of Prochlorococcus marinus (strain AS9601).